The following is a 303-amino-acid chain: GTPase Era (303 aa).

In terms of domain architecture, Era-type G spans 7–174; sequence KSGFVAILGR…IDTLSEKLDE (168 aa). The G1 stretch occupies residues 15–22; sequence GRPNVGKS. 15–22 serves as a coordination point for GTP; sequence GRPNVGKS. A G2 region spans residues 41-45; sequence QTTRN. Residues 62–65 are G3; sequence DTPG. Residues 62-66 and 124-127 each bind GTP; these read DTPGI and NKID. The tract at residues 124–127 is G4; the sequence is NKID. A G5 region spans residues 153 to 155; sequence ISA. Residues 205–283 enclose the KH type-2 domain; it reads TREEVPHSIA…YLETWVKIKN (79 aa).

This sequence belongs to the TRAFAC class TrmE-Era-EngA-EngB-Septin-like GTPase superfamily. Era GTPase family. In terms of assembly, monomer.

The protein resides in the cytoplasm. It is found in the cell membrane. Its function is as follows. An essential GTPase that binds both GDP and GTP, with rapid nucleotide exchange. Plays a role in 16S rRNA processing and 30S ribosomal subunit biogenesis and possibly also in cell cycle regulation and energy metabolism. The protein is GTPase Era of Lactococcus lactis subsp. lactis (strain IL1403) (Streptococcus lactis).